The primary structure comprises 215 residues: Outer membrane protein assembly factor BamC homolog (215 aa).

An N-terminal signal peptide occupies residues 1–16 (MKKIILNLVTAIILAG). The N-palmitoyl cysteine moiety is linked to residue cysteine 17. A lipid anchor (S-diacylglycerol cysteine) is attached at cysteine 17.

Belongs to the BamC family.

It is found in the cell outer membrane. This Haemophilus influenzae (strain ATCC 51907 / DSM 11121 / KW20 / Rd) protein is Outer membrane protein assembly factor BamC homolog.